A 778-amino-acid chain; its full sequence is Subtilisin-like protease SBT5.4 (778 aa).

A signal peptide spans methionine 1–alanine 35. Positions serine 41–histidine 126 constitute an Inhibitor I9 domain. Residues serine 130–alanine 634 form the Peptidase S8 domain. Catalysis depends on aspartate 163, which acts as the Charge relay system. A glycan (N-linked (GlcNAc...) asparagine) is linked at asparagine 218. Histidine 230 serves as the catalytic Charge relay system. Residues asparagine 253 and asparagine 404 are each glycosylated (N-linked (GlcNAc...) asparagine). Residues alanine 401–leucine 486 enclose the PA domain. Serine 567 acts as the Charge relay system in catalysis. 3 N-linked (GlcNAc...) asparagine glycosylation sites follow: asparagine 657, asparagine 690, and asparagine 732.

It belongs to the peptidase S8 family. Expressed in the vasculature of roots and leaves, stomata, sepals, stigma, anthers and siliques.

The protein localises to the endoplasmic reticulum. It is found in the cell membrane. In terms of biological role, serine protease. Has a substrate preference for the hydrophobic residues Phe and Ala and the basic residue Asp in the P1 position, and for Asp, Leu or Ala in the P1' position. Interferes with CLAVATA 3 (CLV3) signaling, but does not cleave CLV3. The protein is Subtilisin-like protease SBT5.4 of Arabidopsis thaliana (Mouse-ear cress).